Consider the following 158-residue polypeptide: Transcription elongation factor GreA (158 aa).

The protein belongs to the GreA/GreB family.

Functionally, necessary for efficient RNA polymerase transcription elongation past template-encoded arresting sites. The arresting sites in DNA have the property of trapping a certain fraction of elongating RNA polymerases that pass through, resulting in locked ternary complexes. Cleavage of the nascent transcript by cleavage factors such as GreA or GreB allows the resumption of elongation from the new 3'terminus. GreA releases sequences of 2 to 3 nucleotides. The sequence is that of Transcription elongation factor GreA from Hamiltonella defensa subsp. Acyrthosiphon pisum (strain 5AT).